Here is a 148-residue protein sequence, read N- to C-terminus: Lysozyme C (148 aa).

Positions 1–18 are cleaved as a signal peptide; it reads MKAVIILGLVLLSVTVQG. A C-type lysozyme domain is found at 19-148; it reads KIFERCELAR…VSQYVQGCGV (130 aa). 4 disulfides stabilise this stretch: Cys-24–Cys-146, Cys-48–Cys-134, Cys-83–Cys-99, and Cys-95–Cys-113. Residues Glu-53 and Asp-71 contribute to the active site.

Belongs to the glycosyl hydrolase 22 family. In terms of assembly, monomer.

It catalyses the reaction Hydrolysis of (1-&gt;4)-beta-linkages between N-acetylmuramic acid and N-acetyl-D-glucosamine residues in a peptidoglycan and between N-acetyl-D-glucosamine residues in chitodextrins.. Functionally, lysozymes have primarily a bacteriolytic function; those in tissues and body fluids are associated with the monocyte-macrophage system and enhance the activity of immunoagents. This Allenopithecus nigroviridis (Allen's swamp monkey) protein is Lysozyme C (LYZ).